Consider the following 362-residue polypeptide: Phosphoserine aminotransferase (362 aa).

Arg-41 is a binding site for L-glutamate. Pyridoxal 5'-phosphate is bound by residues 75–76 (GS), Phe-101, Thr-152, Asp-173, and Gln-196. An N6-(pyridoxal phosphate)lysine modification is found at Lys-197. 239–240 (NT) provides a ligand contact to pyridoxal 5'-phosphate.

The protein belongs to the class-V pyridoxal-phosphate-dependent aminotransferase family. SerC subfamily. Homodimer. It depends on pyridoxal 5'-phosphate as a cofactor.

Its subcellular location is the cytoplasm. It carries out the reaction O-phospho-L-serine + 2-oxoglutarate = 3-phosphooxypyruvate + L-glutamate. The catalysed reaction is 4-(phosphooxy)-L-threonine + 2-oxoglutarate = (R)-3-hydroxy-2-oxo-4-phosphooxybutanoate + L-glutamate. It functions in the pathway amino-acid biosynthesis; L-serine biosynthesis; L-serine from 3-phospho-D-glycerate: step 2/3. Catalyzes the reversible conversion of 3-phosphohydroxypyruvate to phosphoserine and of 3-hydroxy-2-oxo-4-phosphonooxybutanoate to phosphohydroxythreonine. The chain is Phosphoserine aminotransferase from Leuconostoc mesenteroides subsp. mesenteroides (strain ATCC 8293 / DSM 20343 / BCRC 11652 / CCM 1803 / JCM 6124 / NCDO 523 / NBRC 100496 / NCIMB 8023 / NCTC 12954 / NRRL B-1118 / 37Y).